The sequence spans 564 residues: Phenylalanine--tRNA ligase beta subunit (564 aa).

A B5 domain is found at 286–362 (YFQNSLKINV…IGKGLDNFKS (77 aa)). The Mg(2+) site is built by aspartate 340, aspartate 346, glutamate 349, and glutamate 350.

It belongs to the phenylalanyl-tRNA synthetase beta subunit family. Type 2 subfamily. As to quaternary structure, tetramer of two alpha and two beta subunits. Mg(2+) is required as a cofactor.

Its subcellular location is the cytoplasm. The catalysed reaction is tRNA(Phe) + L-phenylalanine + ATP = L-phenylalanyl-tRNA(Phe) + AMP + diphosphate + H(+). The sequence is that of Phenylalanine--tRNA ligase beta subunit from Borrelia duttonii (strain Ly).